The sequence spans 217 residues: Putative thymidylate synthase (217 aa).

Residue Cys-139 is part of the active site.

It belongs to the thymidylate synthase family. Archaeal-type ThyA subfamily. In terms of assembly, monomer.

It is found in the cytoplasm. The protein operates within pyrimidine metabolism; dTTP biosynthesis. Functionally, may catalyze the biosynthesis of dTMP using an unknown cosubstrate. This chain is Putative thymidylate synthase, found in Methanosarcina mazei (strain ATCC BAA-159 / DSM 3647 / Goe1 / Go1 / JCM 11833 / OCM 88) (Methanosarcina frisia).